Reading from the N-terminus, the 142-residue chain is Ribonuclease VapC44 (142 aa).

One can recognise a PINc domain in the interval 4-126 (LLDVNVLLAL…GRFVTFDQSI (123 aa)). D6 and D105 together coordinate Mg(2+).

The protein belongs to the PINc/VapC protein family. Requires Mg(2+) as cofactor.

Toxic component of a type II toxin-antitoxin (TA) system. An RNase. Its cognate antitoxin is VapB44. The sequence is that of Ribonuclease VapC44 from Mycobacterium tuberculosis (strain CDC 1551 / Oshkosh).